Here is a 350-residue protein sequence, read N- to C-terminus: Ion-translocating oxidoreductase complex subunit D (350 aa).

4 helical membrane passes run 20–40, 42–62, 89–109, and 123–143; these read IMLL…WFFG, GTVL…AAIL, IPPL…VVIA, and PAMI…TSWL. Threonine 187 is subject to FMN phosphoryl threonine. 5 consecutive transmembrane segments (helical) span residues 214 to 234, 242 to 262, 267 to 287, 301 to 321, and 322 to 342; these read VLAG…GLFL, WHIP…GWLF, LASP…FFIL, LIFG…GGYP, and DGVA…DYYT.

The protein belongs to the NqrB/RnfD family. In terms of assembly, the complex is composed of six subunits: RnfA, RnfB, RnfC, RnfD, RnfE and RnfG. FMN serves as cofactor.

It is found in the cell inner membrane. In terms of biological role, part of a membrane-bound complex that couples electron transfer with translocation of ions across the membrane. This is Ion-translocating oxidoreductase complex subunit D from Klebsiella pneumoniae (strain 342).